Here is a 436-residue protein sequence, read N- to C-terminus: Alpha-galactosidase mel1 (436 aa).

A signal peptide spans 1 to 24 (MISISFLNCFFLVFLFLFFSDVHG). A disulfide bridge links Cys-45 with Cys-77. Residue Asn-84 is glycosylated (N-linked (GlcNAc...) asparagine). The cysteines at positions 126 and 156 are disulfide-linked. Asp-154 functions as the Nucleophile in the catalytic mechanism. Asn-180 is a glycosylation site (N-linked (GlcNAc...) asparagine). Asp-214 acts as the Proton donor in catalysis.

The protein belongs to the glycosyl hydrolase 27 family.

The protein localises to the endoplasmic reticulum lumen. It is found in the secreted. The enzyme catalyses Hydrolysis of terminal, non-reducing alpha-D-galactose residues in alpha-D-galactosides, including galactose oligosaccharides, galactomannans and galactolipids.. Its function is as follows. Secreted alpha-galactosidase required for catabolic conversion of melibiose to glucose and galactose. This Schizosaccharomyces pombe (strain 972 / ATCC 24843) (Fission yeast) protein is Alpha-galactosidase mel1 (mel1).